The chain runs to 314 residues: Short chain dehydrogenase atnD (314 aa).

NADP(+)-binding residues include Leu41, Lys66, Asp90, and Asn116. Residues Ser171 and Tyr204 each act as proton donor in the active site. NADP(+)-binding residues include Tyr204 and Lys208. Lys208 (lowers pKa of active site Tyr) is an active-site residue.

Belongs to the short-chain dehydrogenases/reductases (SDR) family.

The protein operates within secondary metabolite biosynthesis. Short chain dehydrogenase; part of the gene cluster that mediates the biosynthesis of aspercryptins, linear lipopeptides built from six amino acids including 2 highly unusual and nonproteogenic amino acids, 2-amino-octanoic acid (2aoa) and 2-amino-dodecanol (2adol). The core structure of aspercryptins is as follows: Ser/Ala-Thr-Ile/Val-2aoa-Asn-2adol. The first step of aspercryptin biosynthesis is the generation of the fatty acid precursors, octanoic and dodecanoic acids, by the FAS subunits atnF and atnM. The fatty acid precursors are likely transformed into the corresponding alpha-amino fatty acids in three steps. First, they are hydroxylated by the cytochrome P450 monooxygenase atnE, then oxidized to the corresponding alpha-keto acids by the NAD(P)-dependent oxidoreductase atnD, and finally converted to the alpha-amino fatty acids by the PLP-dependent aminotransferases atnH or atnJ. the alpha-amino fatty acids, 2-amino-octanoic and 2-amino-dodecanoic acids, are recognized, activated, and covalently tethered to the NRPS atnA by its fourth and sixth adenylation domains. The second module of atnA is the Thr module and contains an epimerase (E) domain responsible for the epimerization of Thr to D-allo-Thr. Additionally, despite atnA having only one epimerase domain, the first amino acid of aspercryptin A1 is D-Ser, suggesting that serine is either loaded directly as D-Ser on the first module or that the epimerase domain in the threonine module epimerizes both L-Ser and L-Thr. After condensation of the hexapeptide of aspercryptin, the C-terminal reductase (TE) domain might be involved in the reductive release and production of the aldehyde hexapeptide. Further reduction would generate aspercryptins. The variety of aspercryptins produced reflects the flexibility of the atnA NRPS, allowing incorporation of alanine instead of serine, valine for isoleucine, and a C10 fatty amino alcohol instead of the C12 version. AtnB seems to be involved in the selectivity for Ile versus Val by the third module. Moreover, type B, C and D aspercryptins have an additional N-terminal cichorine, acetyl and propionyl group respectively. The chain is Short chain dehydrogenase atnD from Emericella nidulans (strain FGSC A4 / ATCC 38163 / CBS 112.46 / NRRL 194 / M139) (Aspergillus nidulans).